Reading from the N-terminus, the 188-residue chain is ATP synthase subunit delta (188 aa).

The protein belongs to the ATPase delta chain family. F-type ATPases have 2 components, F(1) - the catalytic core - and F(0) - the membrane proton channel. F(1) has five subunits: alpha(3), beta(3), gamma(1), delta(1), epsilon(1). F(0) has three main subunits: a(1), b(2) and c(10-14). The alpha and beta chains form an alternating ring which encloses part of the gamma chain. F(1) is attached to F(0) by a central stalk formed by the gamma and epsilon chains, while a peripheral stalk is formed by the delta and b chains.

Its subcellular location is the cell membrane. In terms of biological role, f(1)F(0) ATP synthase produces ATP from ADP in the presence of a proton or sodium gradient. F-type ATPases consist of two structural domains, F(1) containing the extramembraneous catalytic core and F(0) containing the membrane proton channel, linked together by a central stalk and a peripheral stalk. During catalysis, ATP synthesis in the catalytic domain of F(1) is coupled via a rotary mechanism of the central stalk subunits to proton translocation. Functionally, this protein is part of the stalk that links CF(0) to CF(1). It either transmits conformational changes from CF(0) to CF(1) or is implicated in proton conduction. The chain is ATP synthase subunit delta from Lawsonia intracellularis (strain PHE/MN1-00).